We begin with the raw amino-acid sequence, 173 residues long: Protein MOTHER of FT and TFL1 (173 aa).

The residue at position 2 (Ala2) is an N-acetylalanine.

It belongs to the phosphatidylethanolamine-binding protein family. In terms of tissue distribution, expressed in gametophytes and developing seeds.

It localises to the cytoplasm. Functionally, may form complexes with phosphorylated ligands by interfering with kinases and their effectors. Regulates seed germination via the abscisic acid (ABA) and gibberellic acid (GA)signaling pathways. During seed germination, MFT expression is directly repressed by ABI3 or promoted by ABI5 in the ABA signaling pathway. Involved in a negative feedback regulation of ABA signaling. Promotes embryo growth by direct repression of ABI5. In the GA signaling pathway, MFT expression is promoted by the DELLA protein RGL2 during seed germination. May regulate seed germination and fertility through the brassinosteroid (BR) signaling pathway. In Arabidopsis thaliana (Mouse-ear cress), this protein is Protein MOTHER of FT and TFL1 (MFT).